The primary structure comprises 705 residues: Effector protein AvrPphDPsv (705 aa).

Residues 1 to 15 (MNPLQSIQHNITTPP) show a composition bias toward polar residues. Disordered regions lie at residues 1–40 (MNPL…ISPS) and 175–205 (RLET…RRES).

It is found in the secreted. Functionally, effector protein involved in non-host recognition. The sequence is that of Effector protein AvrPphDPsv (avrPphDPsv) from Pseudomonas savastanoi (Pseudomonas syringae pv. savastanoi).